Reading from the N-terminus, the 570-residue chain is MAEFNIDELLKNVLENPSTEISEETLKQLYQRTNPYKQFKNDSRVAFCSFTNLREQYIRRLIMTSFIGYVFKALQEWMPSYSKPTHTTKTLLSELITLVDTLKQETNDVPSESVVNTILSIADSCKTQTQKSKEAKTTIDSFLREHFVFDPNLHAQSAYTCADTNASTSADTNASTCADTNVDTCASTCADTNVDTCADTCASTCASTCASTCASTCADTNVDTCADTCVSTCASTCANTEYADLADPERIPLHIMQKTLNVPNELQADIDAITQTPQGYRAAAHILQNIELHQSIKHMLENPRAFKPILFNTKITRYLSQHIPPQDTFYKWNYYIEDNYEELRAATESIYPEKPDLEFAFIIYDVVDSSNQQKVDEFYYKYKDQIFSEVSSIQLGNWTLLGSFKANRERYNYFNQNNEIIKRILDRHEEDLKIGKEILRNTIYHKKAKNIQETGPDAPGLSIYNSTFHTDSGIKGLLSFKELKNLEKASGNIKKAREYDFIDDCEEKIKQLLSKENLTPDEESELIKTKKQLNNALEMLNVPDDTIRVDMWVNNNNKLEKEILYTKAEL.

20 tandem repeats follow at residues 161–164 (CADT), 165–168 (NAST), 169–172 (SADT), 173–176 (NAST), 177–180 (CADT), 181–184 (NVDT), 185–188 (CAST), 189–192 (CADT), 193–196 (NVDT), 197–200 (CADT), 201–204 (CAST), 205–208 (CAST), 209–212 (CAST), 213–216 (CAST), 217–220 (CADT), 221–224 (NVDT), 225–228 (CADT), 229–232 (CVST), 233–236 (CAST), and 237–240 (CANT). The 20 X 4 AA tandem repeats of [CNS]-[ATV]-[DNS]-T stretch occupies residues 161-240 (CADTNASTSA…STCASTCANT (80 aa)).

Belongs to the asfivirus B602L family.

The protein localises to the host cytoplasm. Plays an essential role in the assembly of the icosahedral capsid of the virus. Allows the assembly of 3 molecules of hexon protein p72 and formation of a thermostable trimer. This chain is Protein B602L, found in African swine fever virus (isolate Tick/South Africa/Pretoriuskop Pr4/1996) (ASFV).